Consider the following 553-residue polypeptide: Putative transport protein YidE (553 aa).

Transmembrane regions (helical) follow at residues isoleucine 4–valine 24, glycine 28–serine 48, phenylalanine 65–serine 85, leucine 95–phenylalanine 115, and methionine 158–leucine 178. 2 consecutive RCK C-terminal domains span residues glutamine 191 to glutamine 276 and aspartate 279 to asparagine 361. 6 helical membrane-spanning segments follow: residues methionine 371 to valine 391, glycine 393 to leucine 413, isoleucine 439 to valine 459, leucine 464 to leucine 484, tyrosine 493 to alanine 513, and leucine 533 to glycine 553.

Belongs to the AAE transporter (TC 2.A.81) family. YidE subfamily.

The protein resides in the cell membrane. In Escherichia coli O7:K1 (strain IAI39 / ExPEC), this protein is Putative transport protein YidE.